We begin with the raw amino-acid sequence, 144 residues long: D-aminoacyl-tRNA deacylase (144 aa).

A Gly-cisPro motif, important for rejection of L-amino acids motif is present at residues 136 to 137 (GP).

This sequence belongs to the DTD family. As to quaternary structure, homodimer.

The protein localises to the cytoplasm. The catalysed reaction is glycyl-tRNA(Ala) + H2O = tRNA(Ala) + glycine + H(+). It carries out the reaction a D-aminoacyl-tRNA + H2O = a tRNA + a D-alpha-amino acid + H(+). Functionally, an aminoacyl-tRNA editing enzyme that deacylates mischarged D-aminoacyl-tRNAs. Also deacylates mischarged glycyl-tRNA(Ala), protecting cells against glycine mischarging by AlaRS. Acts via tRNA-based rather than protein-based catalysis; rejects L-amino acids rather than detecting D-amino acids in the active site. By recycling D-aminoacyl-tRNA to D-amino acids and free tRNA molecules, this enzyme counteracts the toxicity associated with the formation of D-aminoacyl-tRNA entities in vivo and helps enforce protein L-homochirality. In Vibrio vulnificus (strain CMCP6), this protein is D-aminoacyl-tRNA deacylase.